Reading from the N-terminus, the 619-residue chain is Chaperone protein HscA homolog (619 aa).

Belongs to the heat shock protein 70 family.

Chaperone involved in the maturation of iron-sulfur cluster-containing proteins. Has a low intrinsic ATPase activity which is markedly stimulated by HscB. The protein is Chaperone protein HscA homolog of Pseudomonas aeruginosa (strain LESB58).